The following is a 342-amino-acid chain: S-adenosylmethionine:tRNA ribosyltransferase-isomerase (342 aa).

It belongs to the QueA family. As to quaternary structure, monomer.

Its subcellular location is the cytoplasm. The catalysed reaction is 7-aminomethyl-7-carbaguanosine(34) in tRNA + S-adenosyl-L-methionine = epoxyqueuosine(34) in tRNA + adenine + L-methionine + 2 H(+). The protein operates within tRNA modification; tRNA-queuosine biosynthesis. In terms of biological role, transfers and isomerizes the ribose moiety from AdoMet to the 7-aminomethyl group of 7-deazaguanine (preQ1-tRNA) to give epoxyqueuosine (oQ-tRNA). The chain is S-adenosylmethionine:tRNA ribosyltransferase-isomerase from Geobacillus sp. (strain WCH70).